A 403-amino-acid polypeptide reads, in one-letter code: S-adenosylmethionine synthase (403 aa).

His15 is a binding site for ATP. Mg(2+) is bound at residue Asp17. Glu43 is a binding site for K(+). L-methionine-binding residues include Glu56 and Gln99. A flexible loop region spans residues 99 to 109 (QSPHIAQGVDR). Residues 166–168 (DAK), 232–233 (KF), Asp241, 247–248 (RK), Ala264, and Lys268 each bind ATP. Asp241 is an L-methionine binding site. Lys272 contributes to the L-methionine binding site.

This sequence belongs to the AdoMet synthase family. Homotetramer; dimer of dimers. The cofactor is Mg(2+). Requires K(+) as cofactor.

The protein resides in the cytoplasm. The enzyme catalyses L-methionine + ATP + H2O = S-adenosyl-L-methionine + phosphate + diphosphate. It functions in the pathway amino-acid biosynthesis; S-adenosyl-L-methionine biosynthesis; S-adenosyl-L-methionine from L-methionine: step 1/1. Its function is as follows. Catalyzes the formation of S-adenosylmethionine (AdoMet) from methionine and ATP. The overall synthetic reaction is composed of two sequential steps, AdoMet formation and the subsequent tripolyphosphate hydrolysis which occurs prior to release of AdoMet from the enzyme. This chain is S-adenosylmethionine synthase, found in Stenotrophomonas maltophilia (strain R551-3).